Consider the following 334-residue polypeptide: N-acetyl-gamma-glutamyl-phosphate reductase (334 aa).

Cys-149 is an active-site residue.

Belongs to the NAGSA dehydrogenase family. Type 1 subfamily.

The protein localises to the cytoplasm. It carries out the reaction N-acetyl-L-glutamate 5-semialdehyde + phosphate + NADP(+) = N-acetyl-L-glutamyl 5-phosphate + NADPH + H(+). Its pathway is amino-acid biosynthesis; L-arginine biosynthesis; N(2)-acetyl-L-ornithine from L-glutamate: step 3/4. In terms of biological role, catalyzes the NADPH-dependent reduction of N-acetyl-5-glutamyl phosphate to yield N-acetyl-L-glutamate 5-semialdehyde. In Sulfurimonas denitrificans (strain ATCC 33889 / DSM 1251) (Thiomicrospira denitrificans (strain ATCC 33889 / DSM 1251)), this protein is N-acetyl-gamma-glutamyl-phosphate reductase.